A 281-amino-acid polypeptide reads, in one-letter code: Energy-coupling factor transporter ATP-binding protein EcfA1 (281 aa).

The ABC transporter domain maps to 6 to 242 (IDVKHLDYRY…GEALIKMGLD (237 aa)). 42–49 (GHNGSGKS) serves as a coordination point for ATP.

The protein belongs to the ABC transporter superfamily. Energy-coupling factor EcfA family. In terms of assembly, forms a stable energy-coupling factor (ECF) transporter complex composed of 2 membrane-embedded substrate-binding proteins (S component), 2 ATP-binding proteins (A component) and 2 transmembrane proteins (T component).

The protein resides in the cell membrane. Functionally, ATP-binding (A) component of a common energy-coupling factor (ECF) ABC-transporter complex. Unlike classic ABC transporters this ECF transporter provides the energy necessary to transport a number of different substrates. The polypeptide is Energy-coupling factor transporter ATP-binding protein EcfA1 (Lactiplantibacillus plantarum (strain ATCC BAA-793 / NCIMB 8826 / WCFS1) (Lactobacillus plantarum)).